A 98-amino-acid polypeptide reads, in one-letter code: MRNYEVVFVIRPDLEAEATTAVVEKFTQLITDQGGQVTRVDQWGKKRMAYEVRKYREGYYVLVEFKGTPAVAQELERVLKISDDVIRYLITRLEEEAS.

It belongs to the bacterial ribosomal protein bS6 family.

Its function is as follows. Binds together with bS18 to 16S ribosomal RNA. The sequence is that of Small ribosomal subunit protein bS6 from Moorella thermoacetica (strain ATCC 39073 / JCM 9320).